Consider the following 1048-residue polypeptide: B3 domain-containing protein Os02g0598200 (1048 aa).

Residues methionine 1–asparagine 345 are disordered. Basic residues predominate over residues serine 16–arginine 25. Composition is skewed to basic and acidic residues over residues asparagine 26 to methionine 134, lysine 151 to lysine 162, cysteine 169 to lysine 214, lysine 243 to lysine 253, alanine 281 to lysine 295, and leucine 332 to asparagine 345. A DNA-binding region (TF-B3 1) is located at residues alanine 375–aspartate 468. Residues glutamine 505–proline 528 are disordered. A DNA-binding region (TF-B3 2) is located at residues leucine 953–lysine 1048.

The protein resides in the nucleus. In Oryza sativa subsp. japonica (Rice), this protein is B3 domain-containing protein Os02g0598200.